A 517-amino-acid chain; its full sequence is Salicyloyl-CoA 5-hydroxylase (517 aa).

This sequence belongs to the aromatic-ring hydroxylase family. KMO subfamily.

It carries out the reaction 2-hydroxybenzoyl-CoA + NADH + O2 + H(+) = 2,5-dihydroxybenzoyl-CoA + NAD(+) + H2O. Its function is as follows. Involved in the degradation of salicylate via a pathway involving coenzyme A derivative. Catalyzes the aromatic hydroxylation of salicylyl-CoA to yield gentisyl-CoA. The polypeptide is Salicyloyl-CoA 5-hydroxylase (Streptomyces sp).